A 151-amino-acid polypeptide reads, in one-letter code: SsrA-binding protein (151 aa).

The protein belongs to the SmpB family.

It is found in the cytoplasm. Its function is as follows. Required for rescue of stalled ribosomes mediated by trans-translation. Binds to transfer-messenger RNA (tmRNA), required for stable association of tmRNA with ribosomes. tmRNA and SmpB together mimic tRNA shape, replacing the anticodon stem-loop with SmpB. tmRNA is encoded by the ssrA gene; the 2 termini fold to resemble tRNA(Ala) and it encodes a 'tag peptide', a short internal open reading frame. During trans-translation Ala-aminoacylated tmRNA acts like a tRNA, entering the A-site of stalled ribosomes, displacing the stalled mRNA. The ribosome then switches to translate the ORF on the tmRNA; the nascent peptide is terminated with the 'tag peptide' encoded by the tmRNA and targeted for degradation. The ribosome is freed to recommence translation, which seems to be the essential function of trans-translation. This chain is SsrA-binding protein, found in Flavobacterium johnsoniae (strain ATCC 17061 / DSM 2064 / JCM 8514 / BCRC 14874 / CCUG 350202 / NBRC 14942 / NCIMB 11054 / UW101) (Cytophaga johnsonae).